The chain runs to 188 residues: Large ribosomal subunit protein bL32m (188 aa).

Zn(2+) contacts are provided by C110, C113, C123, and C126. The tract at residues 164–188 is disordered; it reads TPSEQDQGKRIIERDRKRPSWFTQN. Residues 169-181 show a composition bias toward basic and acidic residues; it reads DQGKRIIERDRKR.

The protein belongs to the bacterial ribosomal protein bL32 family. As to quaternary structure, component of the mitochondrial large ribosomal subunit (mt-LSU). Mature mammalian 55S mitochondrial ribosomes consist of a small (28S) and a large (39S) subunit. The 28S small subunit contains a 12S ribosomal RNA (12S mt-rRNA) and 30 different proteins. The 39S large subunit contains a 16S rRNA (16S mt-rRNA), a copy of mitochondrial valine transfer RNA (mt-tRNA(Val)), which plays an integral structural role, and 52 different proteins. bL32m has a zinc binding site. In terms of processing, MRPL32 precursor is processed by the m-AAA protease (composed of AFG3L2 and SPG7), which cleaves the N-terminal transit peptide. Cleavage by the m-AAA protease takes place prior to assembly into the large subunit, an essential step for mitochondrial ribosome (mitoribosome) assembly. Proper processing by the m-AAA protease is dependent on the zinc-binding region within the tightly folded C-terminal domain of MRPL32: zinc-dependent folding halts degradation initiated from the N-terminus and triggers the release of mature MRPL32.

It is found in the mitochondrion. Its function is as follows. Component of the mitochondrial large ribosomal subunit (mt-LSU). The mitochondrial ribosome (mitoribosome) is a large ribonucleoprotein complex responsible for the synthesis of proteins inside mitochondria. The polypeptide is Large ribosomal subunit protein bL32m (MRPL32) (Homo sapiens (Human)).